Here is an 82-residue protein sequence, read N- to C-terminus: ATP synthase subunit c (82 aa).

2 consecutive transmembrane segments (helical) span residues 18 to 38 and 61 to 81; these read LGEALGAGLAVIGAGLGIGKI and IIAAALVEGVSLFAVVVCGFL.

This sequence belongs to the ATPase C chain family. In terms of assembly, F-type ATPases have 2 components, F(1) - the catalytic core - and F(0) - the membrane proton channel. F(1) has five subunits: alpha(3), beta(3), gamma(1), delta(1), epsilon(1). F(0) has three main subunits: a(1), b(2) and c(10-14). The alpha and beta chains form an alternating ring which encloses part of the gamma chain. F(1) is attached to F(0) by a central stalk formed by the gamma and epsilon chains, while a peripheral stalk is formed by the delta and b chains.

The protein resides in the cell inner membrane. F(1)F(0) ATP synthase produces ATP from ADP in the presence of a proton or sodium gradient. F-type ATPases consist of two structural domains, F(1) containing the extramembraneous catalytic core and F(0) containing the membrane proton channel, linked together by a central stalk and a peripheral stalk. During catalysis, ATP synthesis in the catalytic domain of F(1) is coupled via a rotary mechanism of the central stalk subunits to proton translocation. Functionally, key component of the F(0) channel; it plays a direct role in translocation across the membrane. A homomeric c-ring of between 10-14 subunits forms the central stalk rotor element with the F(1) delta and epsilon subunits. The chain is ATP synthase subunit c from Azobacteroides pseudotrichonymphae genomovar. CFP2.